We begin with the raw amino-acid sequence, 105 residues long: Nucleoid-associated protein PTH_0052 (105 aa).

The protein belongs to the YbaB/EbfC family. Homodimer.

It localises to the cytoplasm. It is found in the nucleoid. Its function is as follows. Binds to DNA and alters its conformation. May be involved in regulation of gene expression, nucleoid organization and DNA protection. This is Nucleoid-associated protein PTH_0052 from Pelotomaculum thermopropionicum (strain DSM 13744 / JCM 10971 / SI).